Consider the following 312-residue polypeptide: Tetraacyldisaccharide 4'-kinase (312 aa).

60 to 67 (IAGGSGKT) is an ATP binding site.

This sequence belongs to the LpxK family.

The enzyme catalyses a lipid A disaccharide + ATP = a lipid IVA + ADP + H(+). The protein operates within glycolipid biosynthesis; lipid IV(A) biosynthesis; lipid IV(A) from (3R)-3-hydroxytetradecanoyl-[acyl-carrier-protein] and UDP-N-acetyl-alpha-D-glucosamine: step 6/6. Its function is as follows. Transfers the gamma-phosphate of ATP to the 4'-position of a tetraacyldisaccharide 1-phosphate intermediate (termed DS-1-P) to form tetraacyldisaccharide 1,4'-bis-phosphate (lipid IVA). This is Tetraacyldisaccharide 4'-kinase from Helicobacter acinonychis (strain Sheeba).